Reading from the N-terminus, the 373-residue chain is Dual-specificity RNA methyltransferase RlmN (373 aa).

Glutamate 94 acts as the Proton acceptor in catalysis. The Radical SAM core domain occupies 100–339 (EDDRATLCVS…VIVRKTRGDD (240 aa)). An intrachain disulfide couples cysteine 107 to cysteine 344. [4Fe-4S] cluster contacts are provided by cysteine 114, cysteine 118, and cysteine 121. S-adenosyl-L-methionine is bound by residues 168-169 (GE), serine 200, 222-224 (SIH), and asparagine 301. The active-site S-methylcysteine intermediate is the cysteine 344.

The protein belongs to the radical SAM superfamily. RlmN family. [4Fe-4S] cluster serves as cofactor.

Its subcellular location is the cytoplasm. It carries out the reaction adenosine(2503) in 23S rRNA + 2 reduced [2Fe-2S]-[ferredoxin] + 2 S-adenosyl-L-methionine = 2-methyladenosine(2503) in 23S rRNA + 5'-deoxyadenosine + L-methionine + 2 oxidized [2Fe-2S]-[ferredoxin] + S-adenosyl-L-homocysteine. The enzyme catalyses adenosine(37) in tRNA + 2 reduced [2Fe-2S]-[ferredoxin] + 2 S-adenosyl-L-methionine = 2-methyladenosine(37) in tRNA + 5'-deoxyadenosine + L-methionine + 2 oxidized [2Fe-2S]-[ferredoxin] + S-adenosyl-L-homocysteine. Specifically methylates position 2 of adenine 2503 in 23S rRNA and position 2 of adenine 37 in tRNAs. m2A2503 modification seems to play a crucial role in the proofreading step occurring at the peptidyl transferase center and thus would serve to optimize ribosomal fidelity. This is Dual-specificity RNA methyltransferase RlmN from Shewanella woodyi (strain ATCC 51908 / MS32).